We begin with the raw amino-acid sequence, 330 residues long: MSSPANLFPGLNDITDVLEEFPLATSRYLTLLHEIDAKCVHSMPNLNERIDKFLKKDFNKDHQTQVRLLNNINKIYEELMPSLEEKMHVSSIMLDNLDRLTSRLELAYEVAIKNTEIPRGLRLGVDNHPAMHLHHELMEKIESKSNSKSSQALKSESRREAMAANRRQGEHYSASTHQQDDSKNDANYGGSRHESQDHTGNNTNSRKRANAANTNNADPETKKRKRRVATTAVSPSTISTATAVNNGRIGTSTASRGVSSVGNSNNSRISRPKTNDYGEPLYCYCNQVAYGEMVGCDGADCELEWFHLPCIGLETLPKGKWYCDDCKKKL.

Positions 139–272 (EKIESKSNSK…NSNNSRISRP (134 aa)) are disordered. The segment covering 231–254 (TAVSPSTISTATAVNNGRIGTSTA) has biased composition (polar residues). Low complexity predominate over residues 255–269 (SRGVSSVGNSNNSRI). The segment at 280 to 329 (PLYCYCNQVAYGEMVGCDGADCELEWFHLPCIGLETLPKGKWYCDDCKKK) adopts a PHD-type zinc-finger fold. Zn(2+)-binding residues include Cys283, Cys285, Cys296, Cys301, His307, Cys310, Cys323, and Cys326.

The protein belongs to the ING family. Interacts with H3K4me3 and to a lesser extent with H3K4me2. Component of the RPD3C(L) complex composed of at least ASH1, CTI6, DEP1, PHO23, RPD3, RXT2, RXT3, SAP30, SDS3, SIN3, UME1 and UME6.

It localises to the nucleus. Functionally, component of the RPD3C(L) histone deacetylase complex (HDAC) responsible for the deacetylation of lysine residues on the N-terminal part of the core histones (H2A, H2B, H3 and H4). Histone deacetylation gives a tag for epigenetic repression and plays an important role in transcriptional regulation, cell cycle progression and developmental events. The polypeptide is Transcriptional regulatory protein PHO23 (PHO23) (Saccharomyces cerevisiae (strain ATCC 204508 / S288c) (Baker's yeast)).